Consider the following 593-residue polypeptide: Aspartate--tRNA ligase (593 aa).

Residue E180 coordinates L-aspartate. The tract at residues 204-207 is aspartate; sequence QIFK. An L-aspartate-binding site is contributed by R226. ATP is bound by residues 226 to 228 and Q235; that span reads RDE. H453 contributes to the L-aspartate binding site. E487 serves as a coordination point for ATP. R494 is an L-aspartate binding site. 539–542 is a binding site for ATP; it reads GLDR.

It belongs to the class-II aminoacyl-tRNA synthetase family. Type 1 subfamily. In terms of assembly, homodimer.

Its subcellular location is the cytoplasm. The enzyme catalyses tRNA(Asp) + L-aspartate + ATP = L-aspartyl-tRNA(Asp) + AMP + diphosphate. Functionally, catalyzes the attachment of L-aspartate to tRNA(Asp) in a two-step reaction: L-aspartate is first activated by ATP to form Asp-AMP and then transferred to the acceptor end of tRNA(Asp). This is Aspartate--tRNA ligase from Clostridium botulinum (strain 657 / Type Ba4).